A 285-amino-acid chain; its full sequence is D-apionate oxidoisomerase (285 aa).

NAD(+)-binding positions include 15-17 (GKM), E36, and D71. Positions 116 and 186 each coordinate Zn(2+).

It belongs to the ApnO family. Requires Zn(2+) as cofactor.

It carries out the reaction D-apionate + NAD(+) = 3-oxoisoapionate + NADH + H(+). It functions in the pathway carbohydrate metabolism. Involved in catabolism of D-apiose. Catalyzes the conversion of D-apionate to 3-oxo-isoapionate. The polypeptide is D-apionate oxidoisomerase (Pectobacterium atrosepticum (strain SCRI 1043 / ATCC BAA-672) (Erwinia carotovora subsp. atroseptica)).